Consider the following 156-residue polypeptide: MLLPDWKIRKEILIEPFSEESLQPAGYDLRVGREAFVSGKLIDVEKEGKVVIPPREYALILTLERVKLPDDVMGDMKIRSSLAREGILGSFAWVDPGWDGNLTLMLYNASNEPVELKYGERFVQIVFIRLEDPPRNPYSGNYQGSTRLVFSKRKKL.

DCTP is bound by residues 79 to 84, Asp95, Gln124, and Tyr138; that span reads RSSLAR.

Belongs to the dCTP deaminase family. Homotrimer.

It catalyses the reaction dCTP + H2O + H(+) = dUTP + NH4(+). Its pathway is pyrimidine metabolism; dUMP biosynthesis; dUMP from dCTP (dUTP route): step 1/2. Functionally, catalyzes the deamination of dCTP to dUTP. This chain is dCTP deaminase, found in Pyrococcus horikoshii (strain ATCC 700860 / DSM 12428 / JCM 9974 / NBRC 100139 / OT-3).